Here is a 533-residue protein sequence, read N- to C-terminus: GMP synthase [glutamine-hydrolyzing] (533 aa).

The 191-residue stretch at 25–215 (SIVIFDFGSQ…VFNICKCHAN (191 aa)) folds into the Glutamine amidotransferase type-1 domain. The active-site Nucleophile is the C102. Catalysis depends on residues H189 and E191. The GMPS ATP-PPase domain occupies 216 to 408 (WTMGNYIQES…LGLPDEMIWR (193 aa)). ATP is bound at residue 243–249 (SGGVDSA).

In terms of assembly, homodimer.

It catalyses the reaction XMP + L-glutamine + ATP + H2O = GMP + L-glutamate + AMP + diphosphate + 2 H(+). It participates in purine metabolism; GMP biosynthesis; GMP from XMP (L-Gln route): step 1/1. In terms of biological role, catalyzes the synthesis of GMP from XMP. The polypeptide is GMP synthase [glutamine-hydrolyzing] (Dehalococcoides mccartyi (strain CBDB1)).